We begin with the raw amino-acid sequence, 676 residues long: ATP-dependent zinc metalloprotease FTSH 2, chloroplastic (676 aa).

A chloroplast-targeting transit peptide spans 1–32 (MAPTSMSLAAKTPLPFSTLPSSGVAQRPVSVT). A helical transmembrane segment spans residues 155 to 175 (LLFNLIGNLAFPLILIGGLFL). Residue 254-261 (GPPGTGKT) participates in ATP binding. H475 is a binding site for Zn(2+). E476 is a catalytic residue. 2 residues coordinate Zn(2+): H479 and D553.

This sequence in the N-terminal section; belongs to the AAA ATPase family. It in the C-terminal section; belongs to the peptidase M41 family. Zn(2+) serves as cofactor.

It localises to the plastid. Its subcellular location is the chloroplast thylakoid membrane. Functionally, probable ATP-dependent zinc metallopeptidase. This Oryza sativa subsp. japonica (Rice) protein is ATP-dependent zinc metalloprotease FTSH 2, chloroplastic (FTSH2).